A 179-amino-acid polypeptide reads, in one-letter code: Large ribosomal subunit protein uL5 (179 aa).

This sequence belongs to the universal ribosomal protein uL5 family. In terms of assembly, part of the 50S ribosomal subunit; part of the 5S rRNA/L5/L18/L25 subcomplex. Contacts the 5S rRNA and the P site tRNA. Forms a bridge to the 30S subunit in the 70S ribosome.

Functionally, this is one of the proteins that bind and probably mediate the attachment of the 5S RNA into the large ribosomal subunit, where it forms part of the central protuberance. In the 70S ribosome it contacts protein S13 of the 30S subunit (bridge B1b), connecting the 2 subunits; this bridge is implicated in subunit movement. Contacts the P site tRNA; the 5S rRNA and some of its associated proteins might help stabilize positioning of ribosome-bound tRNAs. This Rickettsia felis (strain ATCC VR-1525 / URRWXCal2) (Rickettsia azadi) protein is Large ribosomal subunit protein uL5.